A 168-amino-acid chain; its full sequence is Crossover junction endodeoxyribonuclease RuvC (168 aa).

Catalysis depends on residues Asp9, Glu70, and Asp145. Mg(2+) contacts are provided by Asp9, Glu70, and Asp145.

It belongs to the RuvC family. In terms of assembly, homodimer which binds Holliday junction (HJ) DNA. The HJ becomes 2-fold symmetrical on binding to RuvC with unstacked arms; it has a different conformation from HJ DNA in complex with RuvA. In the full resolvosome a probable DNA-RuvA(4)-RuvB(12)-RuvC(2) complex forms which resolves the HJ. Mg(2+) is required as a cofactor.

It is found in the cytoplasm. It carries out the reaction Endonucleolytic cleavage at a junction such as a reciprocal single-stranded crossover between two homologous DNA duplexes (Holliday junction).. Functionally, the RuvA-RuvB-RuvC complex processes Holliday junction (HJ) DNA during genetic recombination and DNA repair. Endonuclease that resolves HJ intermediates. Cleaves cruciform DNA by making single-stranded nicks across the HJ at symmetrical positions within the homologous arms, yielding a 5'-phosphate and a 3'-hydroxyl group; requires a central core of homology in the junction. The consensus cleavage sequence is 5'-(A/T)TT(C/G)-3'. Cleavage occurs on the 3'-side of the TT dinucleotide at the point of strand exchange. HJ branch migration catalyzed by RuvA-RuvB allows RuvC to scan DNA until it finds its consensus sequence, where it cleaves and resolves the cruciform DNA. The polypeptide is Crossover junction endodeoxyribonuclease RuvC (Chlamydia felis (strain Fe/C-56) (Chlamydophila felis)).